Consider the following 305-residue polypeptide: Glutaminase 2 (305 aa).

Positions 61, 113, 158, 165, 189, 241, and 259 each coordinate substrate.

It belongs to the glutaminase family. Homotetramer.

The enzyme catalyses L-glutamine + H2O = L-glutamate + NH4(+). The polypeptide is Glutaminase 2 (Clostridium perfringens (strain 13 / Type A)).